The chain runs to 450 residues: Salicylate synthase (450 aa).

Glu252 serves as the catalytic Proton donor. 270–271 (GT) contacts substrate. Position 297 (Glu297) interacts with Mg(2+). Substrate is bound by residues Tyr385, Arg405, and 419–421 (GAG). The Mg(2+) site is built by Glu431 and Glu434. Lys438 is a binding site for substrate.

It belongs to the anthranilate synthase component I family. Salicylate synthase subfamily. Monomer. It depends on Mg(2+) as a cofactor.

The catalysed reaction is chorismate = isochorismate. It catalyses the reaction isochorismate = salicylate + pyruvate. The enzyme catalyses chorismate = prephenate. Its pathway is siderophore biosynthesis; mycobactin biosynthesis. Involved in the incorporation of salicylate into the virulence-conferring salicylate-based siderophore mycobactin. Catalyzes the initial conversion of chorismate to yield the intermediate isochorismate (isochorismate synthase activity), and the subsequent elimination of the enolpyruvyl side chain in a lyase reaction to give salicylate (isochorismate pyruvate-lyase activity). In the absence of magnesium, MbtI displays a chorismate mutase activity and converts chorismate to prephenate. The chain is Salicylate synthase (mbtI) from Mycolicibacterium paratuberculosis (strain ATCC BAA-968 / K-10) (Mycobacterium paratuberculosis).